Reading from the N-terminus, the 228-residue chain is MAHFMKPSFSAMLIAVTVLAVSPLHARKKVTQPDPNFAATYPDDPRPEVVPNGAIFQPSYGYMPIISGARASHVGDMVTITLVESFAASKSANTTTSRSGGASIIPPTTGPLSFFKATDATASSSHNFKGTGTTGQSNSLSGEITATVARVFPDGTMLIRGEKIMTINRGDEHIRISGLVRPWDIDGTNHVLSTRIGDARISYTGTGDVARASRMGWLGHFFQMISPF.

The signal sequence occupies residues 1–26; that stretch reads MAHFMKPSFSAMLIAVTVLAVSPLHA.

It belongs to the FlgH family. In terms of assembly, the basal body constitutes a major portion of the flagellar organelle and consists of four rings (L,P,S, and M) mounted on a central rod.

The protein localises to the cell outer membrane. The protein resides in the bacterial flagellum basal body. Functionally, assembles around the rod to form the L-ring and probably protects the motor/basal body from shearing forces during rotation. This Zymomonas mobilis subsp. mobilis (strain ATCC 31821 / ZM4 / CP4) protein is Flagellar L-ring protein (flgH).